Reading from the N-terminus, the 1156-residue chain is Pesticidal crystal protein Cry9Aa (1156 aa).

The propeptide at 1 to 23 is removed in mature form; it reads MNQNKHGIIGASNCGCASDDVAK.

It belongs to the delta endotoxin family.

Promotes colloidosmotic lysis by binding to the midgut epithelial cells of insects. This protein is toxic to Galleria mellonella. The sequence is that of Pesticidal crystal protein Cry9Aa (cry9Aa) from Bacillus thuringiensis subsp. galleriae.